The primary structure comprises 339 residues: Dihydroorotate dehydrogenase (quinone) (339 aa).

FMN-binding positions include 64–68 and Thr88; that span reads AGADK. A substrate-binding site is contributed by Lys68. 113–117 serves as a coordination point for substrate; it reads NRNGF. Positions 141 and 174 each coordinate FMN. Residue Asn174 coordinates substrate. Ser177 functions as the Nucleophile in the catalytic mechanism. Residue Asn179 coordinates substrate. FMN is bound by residues Lys219 and Thr247. 248–249 lines the substrate pocket; the sequence is NT. Residues Gly270, Gly299, and 320-321 each bind FMN; that span reads YS.

The protein belongs to the dihydroorotate dehydrogenase family. Type 2 subfamily. In terms of assembly, monomer. FMN is required as a cofactor.

The protein resides in the cell membrane. It carries out the reaction (S)-dihydroorotate + a quinone = orotate + a quinol. Its pathway is pyrimidine metabolism; UMP biosynthesis via de novo pathway; orotate from (S)-dihydroorotate (quinone route): step 1/1. In terms of biological role, catalyzes the conversion of dihydroorotate to orotate with quinone as electron acceptor. The chain is Dihydroorotate dehydrogenase (quinone) (pyrD) from Pasteurella multocida (strain Pm70).